The following is a 301-amino-acid chain: Protein ARMCX6 (301 aa).

Positions 1–6 (MGRARE) are mitochondrion outer membrane (MOM)-targeting sequence. The Mitochondrial intermembrane portion of the chain corresponds to 1–7 (MGRAREM). The helical; Signal-anchor transmembrane segment at 8-25 (GWMAAGLMIGAGACYCMY) threads the bilayer. Positions 26 to 36 (KLTMGRDEGNE) are mitochondrion outer membrane (MOM)-targeting sequence. The Cytoplasmic segment spans residues 26 to 301 (KLTMGRDEGN…REMLVEAISP (276 aa)). Residues 70 to 105 (SEDGEWDEPGAPGGTEDRRSGGGKANRAHPTKQRPF) are disordered.

The protein belongs to the eutherian X-chromosome-specific Armcx family.

Its subcellular location is the mitochondrion. The protein resides in the mitochondrion outer membrane. In terms of biological role, may regulate the dynamics and distribution of mitochondria in neural cells. The sequence is that of Protein ARMCX6 (Armcx6) from Rattus norvegicus (Rat).